Here is a 356-residue protein sequence, read N- to C-terminus: Histidinol-phosphate aminotransferase (356 aa).

Position 211 is an N6-(pyridoxal phosphate)lysine (Lys211).

Belongs to the class-II pyridoxal-phosphate-dependent aminotransferase family. Histidinol-phosphate aminotransferase subfamily. In terms of assembly, homodimer. Requires pyridoxal 5'-phosphate as cofactor.

The enzyme catalyses L-histidinol phosphate + 2-oxoglutarate = 3-(imidazol-4-yl)-2-oxopropyl phosphate + L-glutamate. It functions in the pathway amino-acid biosynthesis; L-histidine biosynthesis; L-histidine from 5-phospho-alpha-D-ribose 1-diphosphate: step 7/9. In Aeromonas hydrophila subsp. hydrophila (strain ATCC 7966 / DSM 30187 / BCRC 13018 / CCUG 14551 / JCM 1027 / KCTC 2358 / NCIMB 9240 / NCTC 8049), this protein is Histidinol-phosphate aminotransferase.